Here is a 209-residue protein sequence, read N- to C-terminus: Large ribosomal subunit protein uL3 (209 aa).

An N5-methylglutamine modification is found at glutamine 150.

Belongs to the universal ribosomal protein uL3 family. Part of the 50S ribosomal subunit. Forms a cluster with proteins L14 and L19. Methylated by PrmB.

One of the primary rRNA binding proteins, it binds directly near the 3'-end of the 23S rRNA, where it nucleates assembly of the 50S subunit. In Ectopseudomonas mendocina (strain ymp) (Pseudomonas mendocina), this protein is Large ribosomal subunit protein uL3.